Reading from the N-terminus, the 988-residue chain is MESQILNAIEIALDGSADQKLQVQAYEFLNEVKGSKSGYDTALKLLSSSPSNTLISQLKFFLYQVLEENAENLDPEDCLQLCQTLFKMLSEFIVNDLKDEAFLRNKLAQVFAKVFTQVYISTVPDFLTNLLATTQTNSQLALDYYTRILMSIHMEIGDKYITRSPALSERNMTLKDAIRSRDMSALVTSWFNILENTNNLDEVLDNTLNIIAQYVDWMEIGLFVSPQSINTIIGYLSRENERNSTCETLIHILLKKMPAQNKLELVSLLNLTNVISSIDLSDDLEFVERIAKLANQIGEELLIVLGNQPSLLDQVNEQLLKLWPIVLTFLGHEYDDVSQSVFPFIQQFLGACKKHSQLYSVELLSTLLNKTISKMEYDEEDDDSDEETERQFAEFRARLKLFQDGIASLVPDLYIEAVPIIINQSLFEGDKPWNKLELGMFELSNFSESLKNNVINAPKAKISESKPYLMFQEFLVKLINSPFIIKVNHPLIQSSFFELVVKHYSFLNSHENRKELVFKIIEIFTSPLGLLNSNDKVRLRSWYLFFRFMKLTKPKMDNEALIEDIVLKMQPLLVIKAELPTRDEDDDVVENGNFNNQQYLFETMGLLISLIPNEYVSLKVKLVQAMFQPIFNDLEKCISIANKEPIIVLQAHHSLMALGTIVRGYDYETNLKFPPEVVEKVDNAAQVVLITLENFSKSESVRDASRFAFARFIPILNSTIISGHLTKLITIIWSAPNLKISEISDFLSFLGQIAHTYRTDENIYQLLNNFLSPLFKKVFEVLDLPVTEDESLRPDISRDKNFLKKAILNFINAIIINHLPSLLVTESNKNELATVVSKLFEYAYDISDTAVSKLAIVQLINLVNVFGQEGKISDEQDKYGQSLPPVEGIDNFLMEKVVNLSFELPFRKQEFVLGDAQYRLIAQDIALLLKTFQQKKGEQFVEYLSVYLTNMGLGQDMTNDFCSNLINLDLKDYKKYFVTFVSQMKGEK.

Belongs to the exportin family.

It is found in the nucleus. It localises to the cytoplasm. Functionally, tRNA nucleus export receptor which facilitates tRNA translocation across the nuclear pore complex. Involved in pre-tRNA splicing, probably by affecting the interaction of pre-tRNA with splicing endonuclease. This is Exportin-T (LOS1) from Lodderomyces elongisporus (strain ATCC 11503 / CBS 2605 / JCM 1781 / NBRC 1676 / NRRL YB-4239) (Yeast).